The chain runs to 242 residues: Beta-glucanase (242 aa).

Residues 1 to 28 form the signal peptide; that stretch reads MPYLKRVLLLLVTGLFMSLFAVTATASA. Gln29 carries the post-translational modification Pyrrolidone carboxylic acid. A GH16 domain is found at 29–242; it reads QTGGSFFDPF…HYDWVRYTKK (214 aa). Cys60 and Cys89 are disulfide-bonded. Glu133 (nucleophile) is an active-site residue. Residue Glu137 is the Proton donor of the active site.

It belongs to the glycosyl hydrolase 16 family.

Its subcellular location is the secreted. It catalyses the reaction Hydrolysis of (1-&gt;4)-beta-D-glucosidic linkages in beta-D-glucans containing (1-&gt;3)- and (1-&gt;4)-bonds.. The polypeptide is Beta-glucanase (bglS) (Bacillus subtilis (strain 168)).